The sequence spans 211 residues: FMN-dependent NADH:quinone oxidoreductase (211 aa).

FMN contacts are provided by residues 17 to 19, 102 to 105, and 146 to 149; these read SNS, MWNL, and SRGG.

This sequence belongs to the azoreductase type 1 family. In terms of assembly, homodimer. It depends on FMN as a cofactor.

The enzyme catalyses 2 a quinone + NADH + H(+) = 2 a 1,4-benzosemiquinone + NAD(+). It catalyses the reaction N,N-dimethyl-1,4-phenylenediamine + anthranilate + 2 NAD(+) = 2-(4-dimethylaminophenyl)diazenylbenzoate + 2 NADH + 2 H(+). Quinone reductase that provides resistance to thiol-specific stress caused by electrophilic quinones. Functionally, also exhibits azoreductase activity. Catalyzes the reductive cleavage of the azo bond in aromatic azo compounds to the corresponding amines. The polypeptide is FMN-dependent NADH:quinone oxidoreductase (Macrococcus caseolyticus (strain JCSC5402) (Macrococcoides caseolyticum)).